Here is a 307-residue protein sequence, read N- to C-terminus: Cytochrome c1, heme protein, mitochondrial (307 aa).

The N-terminal 56 residues, Met1 to Tyr56, are a transit peptide targeting the mitochondrion. Residues Gly57–Met269 lie on the Mitochondrial intermembrane side of the membrane. The Cytochrome c domain occupies Ala89 to Ser259. Heme c is bound by residues Cys102, Cys105, His106, and Met225. The chain crosses the membrane as a helical span at residues Gly270–Tyr287. The Mitochondrial matrix segment spans residues Lys288 to Lys307.

The protein belongs to the cytochrome c family. Component of the ubiquinol-cytochrome c oxidoreductase (cytochrome b-c1 complex, complex III, CIII), a multisubunit enzyme composed of 3 respiratory subunits cytochrome b, cytochrome c1 and Rieske protein, 2 core protein subunits, and additional low-molecular weight protein subunits. The complex exists as an obligatory dimer and forms supercomplexes (SCs) in the inner mitochondrial membrane with cytochrome c oxidase (complex IV, CIV). Heme c serves as cofactor.

The protein resides in the mitochondrion inner membrane. The catalysed reaction is a quinol + 2 Fe(III)-[cytochrome c](out) = a quinone + 2 Fe(II)-[cytochrome c](out) + 2 H(+)(out). Its function is as follows. Component of the ubiquinol-cytochrome c oxidoreductase, a multisubunit transmembrane complex that is part of the mitochondrial electron transport chain which drives oxidative phosphorylation. The respiratory chain contains 3 multisubunit complexes succinate dehydrogenase (complex II, CII), ubiquinol-cytochrome c oxidoreductase (cytochrome b-c1 complex, complex III, CIII) and cytochrome c oxidase (complex IV, CIV), that cooperate to transfer electrons derived from NADH and succinate to molecular oxygen, creating an electrochemical gradient over the inner membrane that drives transmembrane transport and the ATP synthase. The cytochrome b-c1 complex catalyzes electron transfer from ubiquinol to cytochrome c, linking this redox reaction to translocation of protons across the mitochondrial inner membrane, with protons being carried across the membrane as hydrogens on the quinol. In the process called Q cycle, 2 protons are consumed from the matrix, 4 protons are released into the intermembrane space and 2 electrons are passed to cytochrome c. Cytochrome c1 is a catalytic core subunit containing a c-type heme. It transfers electrons from the [2Fe-2S] iron-sulfur cluster of the Rieske protein to cytochrome c. This chain is Cytochrome c1, heme protein, mitochondrial (cyt1), found in Schizosaccharomyces pombe (strain 972 / ATCC 24843) (Fission yeast).